Consider the following 65-residue polypeptide: Large ribosomal subunit protein bL31 (65 aa).

Zn(2+) contacts are provided by Cys16, Cys18, Cys36, and Cys39.

It belongs to the bacterial ribosomal protein bL31 family. Type A subfamily. As to quaternary structure, part of the 50S ribosomal subunit. Zn(2+) serves as cofactor.

Its function is as follows. Binds the 23S rRNA. This chain is Large ribosomal subunit protein bL31, found in Brevibacillus brevis (strain 47 / JCM 6285 / NBRC 100599).